Reading from the N-terminus, the 398-residue chain is Serine/threonine-protein kinase UL13 (398 aa).

Over residues 1–10 (MAAGGGGGGV) the composition is skewed to gly residues. Residues 1 to 44 (MAAGGGGGGVSRAALARPPIHRGTSAPGGAIAAAGGDGDGDEAS) are disordered. One can recognise a Protein kinase domain in the interval 80-398 (TGDPVAVGAG…GGARFAELAA (319 aa)). Residues 86 to 94 (VGAGSYGSV) and Lys103 each bind ATP. Asp194 (proton acceptor) is an active-site residue.

The protein belongs to the protein kinase superfamily. Ser/Thr protein kinase family. In terms of processing, autophosphorylated.

It localises to the virion tegument. The protein localises to the host nucleus. The protein resides in the host cytoplasm. It is found in the host endoplasmic reticulum. The catalysed reaction is L-seryl-[protein] + ATP = O-phospho-L-seryl-[protein] + ADP + H(+). It carries out the reaction L-threonyl-[protein] + ATP = O-phospho-L-threonyl-[protein] + ADP + H(+). Functionally, multifunctional serine/threonine kinase that plays a role in several processes including egress of virus particles from the nucleus, modulation of the actin cytoskeleton and regulation of viral and cellular gene expression. Regulates the nuclear localization of viral envelopment factors UL34 and UL31, by phosphorylating the US3 kinase, indicating a role in nuclear egress. Disrupts host nuclear lamins, including LMNA and LMNB1. Phosphorylates the viral Fc receptor composed of glycoproteins E (gE) and I (gI). Phosphorylation of glycoprotein E (gE) by UL13 alters its subcellular localization, from the host early endosome to the plasma membrane. Participates in the transcriptional regulation of cellular and viral mRNAs mainly by phosphorylating the viral transcriptional regulator ICP22. Functions as an antagonist of the host RLR-mediated antiviral responses via suppression of the transcription of cytosolic receptors RIGI and IFIH1. Facilitates immune evasion also by recruiting host RNF5 to initiate the 'Lys-27'-/'Lys-29'-linked polyubiquitination of STING1; leading to its degradation. Blocks host IFN-beta transactivation mediated by the cGAS-STING pathway by phosphorylating host IRF3. In turn, IRF3 binding to the IRF3-responsive promoters and downstream interferon stimulated genes/ISG expression are greatly impaired. Induces the activation of the host DNA damage response via H2AX phosphorylation to improve efficient viral replication and progeny production. The sequence is that of Serine/threonine-protein kinase UL13 (UL13) from Suid herpesvirus 1 (strain NIA-3) (SuHV-1).